The chain runs to 420 residues: Protein disulfide isomerase Creld1 (420 aa).

The first 29 residues, 1 to 29 (MAPLPPRGLVPSLLWCLSLFLSLPGPVWL), serve as a signal peptide directing secretion. Topologically, residues 30–362 (QPSPPPHPSP…GFFAEMTEDE (333 aa)) are extracellular. The CXXC motif lies at 46 to 49 (CHTC). Disulfide bonds link Cys-46–Cys-49, Cys-155–Cys-169, Cys-163–Cys-181, and Cys-183–Cys-192. One can recognise an EGF-like 1 domain in the interval 153–193 (LPCPGGTERPCGGYGQCEGEGTRGGSGHCDCQAGYGGEACG). The N-linked (GlcNAc...) asparagine glycan is linked to Asn-205. 2 FU repeats span residues 208-255 (HLVC…EQAT) and 268-315 (SYEC…VVCP). The CXXC signature appears at 278–281 (CLGC). 4 disulfide bridges follow: Cys-278–Cys-281, Cys-309–Cys-321, Cys-314–Cys-330, and Cys-332–Cys-343. Residues 305-342 (DVDECETVVCPGENEKCENTEGGYRCVCAEGYRQEDGI) form the EGF-like 2; calcium-binding domain. Residues 363–383 (MVVLQQMFFGVIICALATLAA) traverse the membrane as a helical segment. Residue Lys-384 is a topological domain, cytoplasmic. A helical transmembrane segment spans residues 385–405 (GDLVFTAIFIGAVAAMTGYWL). At 406–420 (SERSDRVLEGFIKGR) the chain is on the extracellular side.

Belongs to the CRELD family. Expressed in myoblast C2C12 cells (at protein level).

It is found in the membrane. It carries out the reaction Catalyzes the rearrangement of -S-S- bonds in proteins.. In terms of biological role, protein disulfide isomerase. Promotes the localization of acetylcholine receptors (AChRs) to the plasma membrane. The protein is Protein disulfide isomerase Creld1 (Creld1) of Mus musculus (Mouse).